Here is a 325-residue protein sequence, read N- to C-terminus: GMP reductase (325 aa).

C173 acts as the Thioimidate intermediate in catalysis. Residue 202 to 225 (IIADGGIRSHGDIAKSVRFGATMV) participates in NADP(+) binding.

This sequence belongs to the IMPDH/GMPR family. GuaC type 2 subfamily.

It catalyses the reaction IMP + NH4(+) + NADP(+) = GMP + NADPH + 2 H(+). Functionally, catalyzes the irreversible NADPH-dependent deamination of GMP to IMP. It functions in the conversion of nucleobase, nucleoside and nucleotide derivatives of G to A nucleotides, and in maintaining the intracellular balance of A and G nucleotides. The sequence is that of GMP reductase from Acidovorax ebreus (strain TPSY) (Diaphorobacter sp. (strain TPSY)).